Consider the following 298-residue polypeptide: Succinate dehydrogenase [ubiquinone] iron-sulfur subunit, mitochondrial (298 aa).

Residues 59-147 (YRFNPEAPGA…STKIYPLPHM (89 aa)) form the 2Fe-2S ferredoxin-type domain. 4 residues coordinate [2Fe-2S] cluster: cysteine 107, cysteine 112, cysteine 115, and cysteine 127. Positions 190 to 220 (ERDRLDGLYECILCACCSTSCPSYWWNADKY) constitute a 4Fe-4S ferredoxin-type domain. [4Fe-4S] cluster is bound by residues cysteine 200, cysteine 203, and cysteine 206. Cysteine 210 contributes to the [3Fe-4S] cluster binding site. Tryptophan 215 contacts a ubiquinone. Residues cysteine 257 and cysteine 263 each coordinate [3Fe-4S] cluster. Cysteine 267 serves as a coordination point for [4Fe-4S] cluster.

It belongs to the succinate dehydrogenase/fumarate reductase iron-sulfur protein family. Component of complex II composed of four subunits: a flavoprotein (FP), an iron-sulfur protein (IP), and a cytochrome b composed of a large and a small subunit. Requires [2Fe-2S] cluster as cofactor. It depends on [3Fe-4S] cluster as a cofactor. The cofactor is [4Fe-4S] cluster.

The protein localises to the mitochondrion inner membrane. The catalysed reaction is a quinone + succinate = fumarate + a quinol. It participates in carbohydrate metabolism; tricarboxylic acid cycle; fumarate from succinate (eukaryal route): step 1/1. Functionally, iron-sulfur protein (IP) subunit of succinate dehydrogenase (SDH) that is involved in complex II of the mitochondrial electron transport chain and is responsible for transferring electrons from succinate to ubiquinone (coenzyme Q). The sequence is that of Succinate dehydrogenase [ubiquinone] iron-sulfur subunit, mitochondrial (sdhb-1) from Caenorhabditis elegans.